The following is a 198-amino-acid chain: Large ribosomal subunit protein bL9 (198 aa).

Basic and acidic residues predominate over residues 156 to 166 (RGEDISTRQED). The tract at residues 156–198 (RGEDISTRQEDQDAAAEALAAAGEFFDPEAHNDGEQEEEAGDK) is disordered.

The protein belongs to the bacterial ribosomal protein bL9 family.

Functionally, binds to the 23S rRNA. The chain is Large ribosomal subunit protein bL9 from Rhodopseudomonas palustris (strain BisB18).